The following is a 381-amino-acid chain: Succinate--CoA ligase [ADP-forming] subunit beta (381 aa).

Residues Lys-9–Lys-236 form the ATP-grasp domain. ATP is bound by residues Lys-45, Gly-52–Gly-54, Glu-91, Val-94, and Glu-99. 2 residues coordinate Mg(2+): Asn-191 and Asp-205. Residues Asn-256 and Gly-313–Thr-315 contribute to the substrate site.

It belongs to the succinate/malate CoA ligase beta subunit family. Heterotetramer of two alpha and two beta subunits. The cofactor is Mg(2+).

It carries out the reaction succinate + ATP + CoA = succinyl-CoA + ADP + phosphate. The catalysed reaction is GTP + succinate + CoA = succinyl-CoA + GDP + phosphate. Its pathway is carbohydrate metabolism; tricarboxylic acid cycle; succinate from succinyl-CoA (ligase route): step 1/1. Functionally, succinyl-CoA synthetase functions in the citric acid cycle (TCA), coupling the hydrolysis of succinyl-CoA to the synthesis of either ATP or GTP and thus represents the only step of substrate-level phosphorylation in the TCA. The beta subunit provides nucleotide specificity of the enzyme and binds the substrate succinate, while the binding sites for coenzyme A and phosphate are found in the alpha subunit. The protein is Succinate--CoA ligase [ADP-forming] subunit beta of Halorubrum lacusprofundi (strain ATCC 49239 / DSM 5036 / JCM 8891 / ACAM 34).